The chain runs to 1358 residues: Indole-3-acetaldehyde oxidase (1358 aa).

One can recognise a 2Fe-2S ferredoxin-type domain in the interval 11 to 98 (STVVLAVNGK…RCSVTTSEGI (88 aa)). Positions 50, 55, and 58 each coordinate [2Fe-2S] cluster. One can recognise an FAD-binding PCMH-type domain in the interval 241–419 (IAASGDGWYH…LSIFIPEWGS (179 aa)). Residues 532–559 (SSAPSNIDTPNGSYTHETGSNVDSPERH) are disordered. Polar residues predominate over residues 537-554 (NIDTPNGSYTHETGSNVD).

The protein belongs to the xanthine dehydrogenase family. In terms of assembly, aldehyde oxidases (AO) are homodimers and heterodimers of AO subunits. Requires [2Fe-2S] cluster as cofactor. FAD serves as cofactor. Mo-molybdopterin is required as a cofactor. Mostly expressed in roots, and, to a lower extent, in mesocotyl, leaves and coleoptile. Accumulates in apical region of maize coleoptiles (at protein level).

The protein localises to the cytoplasm. The catalysed reaction is indole-3-acetaldehyde + O2 + H2O = (indol-3-yl)acetate + H2O2 + H(+). Inhibited by 2-mercaptoethanol, p-chloromercuribenzoate, and iodoacetate. Functionally, in higher plants aldehyde oxidases (AO) appear to be homo- and heterodimeric assemblies of AO subunits with probably different physiological functions. Involved in the biosynthesis of auxin from (indol-3-yl)acetaldehyde. Can also use indole-3-aldehyde and benzaldehyde as substrate. This Zea mays (Maize) protein is Indole-3-acetaldehyde oxidase (AO1).